A 176-amino-acid polypeptide reads, in one-letter code: Large ribosomal subunit protein eL20A (176 aa).

This sequence belongs to the eukaryotic ribosomal protein eL20 family. Component of the large ribosomal subunit (LSU). Mature yeast ribosomes consist of a small (40S) and a large (60S) subunit. The 40S small subunit contains 1 molecule of ribosomal RNA (18S rRNA) and at least 33 different proteins. The large 60S subunit contains 3 rRNA molecules (25S, 5.8S and 5S rRNA) and at least 46 different proteins. eL20 forms multiple interactions with RNA and proteins in the central protuberance, connecting components of core functional centers that are located far apart.

Its subcellular location is the cytoplasm. Its function is as follows. Component of the ribosome, a large ribonucleoprotein complex responsible for the synthesis of proteins in the cell. The small ribosomal subunit (SSU) binds messenger RNAs (mRNAs) and translates the encoded message by selecting cognate aminoacyl-transfer RNA (tRNA) molecules. The large subunit (LSU) contains the ribosomal catalytic site termed the peptidyl transferase center (PTC), which catalyzes the formation of peptide bonds, thereby polymerizing the amino acids delivered by tRNAs into a polypeptide chain. The nascent polypeptides leave the ribosome through a tunnel in the LSU and interact with protein factors that function in enzymatic processing, targeting, and the membrane insertion of nascent chains at the exit of the ribosomal tunnel. The polypeptide is Large ribosomal subunit protein eL20A (rpl2001) (Schizosaccharomyces pombe (strain 972 / ATCC 24843) (Fission yeast)).